Consider the following 649-residue polypeptide: MITQAMIENFPSSPGVYLMKSADDTVIYVGKARNLKKRVRSYAGDTRDSRIHIRFMVQLVHSVDYLVTDTEKEALILENTLIKQHRPKYNINLRDDKTYFSLRMDMKEQFPRLSIVRKIPSDGARYFGPYASATAAKEVLKQLYKMFPLRHYPLATCMARKRPCLYHQIKQCSAPCCGLISAAEYAALAQGAALFLEGKNNEVARLYRSKMNLASEQMRYEDAARYRDLLRAIEVTVERQKMVAQSGDSDVFGVHREADRMQIALLHIRGGTLTGGRSFLFDWELETEEGLASFLNEYYDLDAPIPPQVLIPLPIAEPAALEELLSEKAGKKVTIAVPQRGPKLEMVKLAGKNAETAAQERLARESSSATLLTELAEKLNLPHPPRRIECYDISNIQGEMAVGSRVVFIDGRADKSLYRRYRIKGVLQSDDFAMMREVLSRRFKADSHEEKPDLIVVDGGLGQLGVLNAVLDELEVTGVEAAGLAKSRVARDMESEEIERSDERVFRPGRKNAIALRQSSAPLLLLVRIRDEAHRFAVTYHKDVRSKVLTGSELDGVAGIGEKRKKALLKHFGSLKRVKEATLEELKGAPGMTESAARALVERLHGGPLPNPPPPGEGAMGDGSIPSPRNGVMDDSIPSPSGRGWPKAG.

The region spanning 12-91 is the GIY-YIG domain; that stretch reads SSPGVYLMKS…IKQHRPKYNI (80 aa). Residues 201 to 236 enclose the UVR domain; sequence NEVARLYRSKMNLASEQMRYEDAARYRDLLRAIEVT. The tract at residues 603–649 is disordered; it reads RLHGGPLPNPPPPGEGAMGDGSIPSPRNGVMDDSIPSPSGRGWPKAG.

It belongs to the UvrC family. Interacts with UvrB in an incision complex.

The protein localises to the cytoplasm. The UvrABC repair system catalyzes the recognition and processing of DNA lesions. UvrC both incises the 5' and 3' sides of the lesion. The N-terminal half is responsible for the 3' incision and the C-terminal half is responsible for the 5' incision. The sequence is that of UvrABC system protein C from Geobacter sp. (strain M21).